We begin with the raw amino-acid sequence, 350 residues long: Variable large protein 4 (350 aa).

Residues 1-18 (MRRRISAIIMTLFMVLVS) form the signal peptide. Residue Cys-19 is the site of N-palmitoyl cysteine attachment. Cys-19 carries S-diacylglycerol cysteine lipidation.

This sequence belongs to the variable large protein (Vlp) family. Delta subfamily.

It localises to the cell outer membrane. The Vlp and Vsp proteins are antigenically distinct proteins, only one vlp or vsp gene is transcriptionally active at any one time. Switching between these genes is a mechanism of host immune response evasion. The polypeptide is Variable large protein 4 (Borrelia hermsii).